Reading from the N-terminus, the 49-residue chain is Large ribosomal subunit protein eL40 (49 aa).

It belongs to the eukaryotic ribosomal protein eL40 family.

The sequence is that of Large ribosomal subunit protein eL40 from Halorubrum lacusprofundi (strain ATCC 49239 / DSM 5036 / JCM 8891 / ACAM 34).